We begin with the raw amino-acid sequence, 446 residues long: Phosphoglucosamine mutase (446 aa).

Catalysis depends on S104, which acts as the Phosphoserine intermediate. Mg(2+) is bound by residues S104, D241, D243, and D245. Phosphoserine is present on S104.

It belongs to the phosphohexose mutase family. Mg(2+) serves as cofactor. Activated by phosphorylation.

It carries out the reaction alpha-D-glucosamine 1-phosphate = D-glucosamine 6-phosphate. In terms of biological role, catalyzes the conversion of glucosamine-6-phosphate to glucosamine-1-phosphate. The sequence is that of Phosphoglucosamine mutase from Teredinibacter turnerae (strain ATCC 39867 / T7901).